The primary structure comprises 330 residues: tRNA U34 carboxymethyltransferase (330 aa).

Carboxy-S-adenosyl-L-methionine-binding positions include Lys91, Trp105, Lys110, Gly130, 152-154, 181-182, Met196, Tyr200, and Arg315; these read DPS and IE.

This sequence belongs to the class I-like SAM-binding methyltransferase superfamily. CmoB family. As to quaternary structure, homotetramer.

The catalysed reaction is carboxy-S-adenosyl-L-methionine + 5-hydroxyuridine(34) in tRNA = 5-carboxymethoxyuridine(34) in tRNA + S-adenosyl-L-homocysteine + H(+). In terms of biological role, catalyzes carboxymethyl transfer from carboxy-S-adenosyl-L-methionine (Cx-SAM) to 5-hydroxyuridine (ho5U) to form 5-carboxymethoxyuridine (cmo5U) at position 34 in tRNAs. This is tRNA U34 carboxymethyltransferase from Shewanella sediminis (strain HAW-EB3).